The chain runs to 109 residues: Large ribosomal subunit protein P1C (109 aa).

The span at 68-83 (ASAPTAAGAGAAAPAE) shows a compositional bias: low complexity. The segment at 68-109 (ASAPTAAGAGAAAPAEAAEEEKKEEAKEEEESDEDMGFGLFD) is disordered. The span at 94–103 (KEEEESDEDM) shows a compositional bias: acidic residues. S99 carries the post-translational modification Phosphoserine.

This sequence belongs to the eukaryotic ribosomal protein P1/P2 family. Component of the large ribosomal subunit (LSU). Mature yeast ribosomes consist of a small (40S) and a large (60S) subunit. The 40S small subunit contains 1 molecule of ribosomal RNA (18S rRNA) and at least 33 different proteins. The large 60S subunit contains 3 rRNA molecules (25S, 5.8S and 5S rRNA) and at least 46 different proteins. The acidic ribosomal P-proteins form the stalk structure of the 60S subunit. They are organized as a pentameric complex in which uL10/P0 interacts with 2 heterodimers of P1 and P2 proteins.

The protein localises to the cytoplasm. Component of the ribosome, a large ribonucleoprotein complex responsible for the synthesis of proteins in the cell. The small ribosomal subunit (SSU) binds messenger RNAs (mRNAs) and translates the encoded message by selecting cognate aminoacyl-transfer RNA (tRNA) molecules. The large subunit (LSU) contains the ribosomal catalytic site termed the peptidyl transferase center (PTC), which catalyzes the formation of peptide bonds, thereby polymerizing the amino acids delivered by tRNAs into a polypeptide chain. The nascent polypeptides leave the ribosome through a tunnel in the LSU and interact with protein factors that function in enzymatic processing, targeting, and the membrane insertion of nascent chains at the exit of the ribosomal tunnel. This is Large ribosomal subunit protein P1C (rpp103) from Schizosaccharomyces pombe (strain 972 / ATCC 24843) (Fission yeast).